Here is a 947-residue protein sequence, read N- to C-terminus: Zinc finger CCCH domain-containing protein 18 (947 aa).

An N-acetylmethionine modification is found at methionine 1. Disordered regions lie at residues 1-218 (MDVA…PRPT), 275-295 (GGPV…TESA), and 387-921 (YTEA…TLSR). Serine 6, serine 32, serine 44, serine 57, serine 63, serine 70, serine 74, serine 79, and serine 91 each carry phosphoserine. A compositionally biased stretch (basic and acidic residues) spans 73-85 (KSQDQDSEAHELS). Positions 94-104 (EEGDDAEEDGT) are enriched in acidic residues. A Phosphothreonine modification is found at threonine 104. A phosphoserine mark is found at serine 105 and serine 113. A compositionally biased stretch (basic and acidic residues) spans 105–119 (SDLRDEASSVTRELD). Acidic residues-rich tracts occupy residues 120-131 (EHELDYDEEVPE) and 138-153 (QEEE…EEEK). Residues 160–185 (EEGKPDVQSVGEKEPTEAAKEKKKED) show a composition bias toward basic and acidic residues. The residue at position 168 (serine 168) is a Phosphoserine. Residues 186-202 (DDGEIDDGEIDDDDLEE) are compositionally biased toward acidic residues. Over residues 203 to 212 (GEVKDPSDRK) the composition is skewed to basic and acidic residues. The C3H1-type zinc finger occupies 214–240 (RPRPTCRFFMKGNCTWGMNCRFIHPGV). Over residues 391–479 (EPYHNYRDRE…DRDKDKEKPK (89 aa)) the composition is skewed to basic and acidic residues. Serine 482 bears the Phosphoserine mark. Residue lysine 505 forms a Glycyl lysine isopeptide (Lys-Gly) (interchain with G-Cter in SUMO2) linkage. Positions 505-515 (KRADEWKDPWR) are enriched in basic and acidic residues. 3 positions are modified to phosphoserine: serine 527, serine 529, and serine 531. Residues 540–601 (SASSASASNS…SRSRSFSSSP (62 aa)) are compositionally biased toward low complexity. Over residues 602–611 (SPSPTPSPHR) the composition is skewed to pro residues. Glycyl lysine isopeptide (Lys-Gly) (interchain with G-Cter in SUMO2) cross-links involve residues lysine 617 and lysine 656. The segment covering 656–665 (KPGDLREARR) has biased composition (basic and acidic residues). Composition is skewed to low complexity over residues 687 to 720 (GSSY…SVHS) and 731 to 745 (ASPV…PTPA). Over residues 755 to 769 (KKEDGVREEKRKRDP) the composition is skewed to basic and acidic residues. Low complexity predominate over residues 773–804 (PPKSSKAPAGGKASQQAAAPQQAAPGQPQQGS). Lysine 809 is modified (N6-acetyllysine). A Glycyl lysine isopeptide (Lys-Gly) (interchain with G-Cter in SUMO2) cross-link involves residue lysine 812. The segment covering 819 to 836 (AAEKGSRKRYEPSDKDRQ) has biased composition (basic and acidic residues). Residues serine 837, serine 846, serine 862, serine 887, and serine 890 each carry the phosphoserine modification. Residues 887 to 918 (SPQSKSSSKVTSVPGKATDTATAGTKSGKAST) are compositionally biased toward low complexity. Lysine 902 participates in a covalent cross-link: Glycyl lysine isopeptide (Lys-Gly) (interchain with G-Cter in SUMO2). The stretch at 915–944 (KASTLSRREELLKQLKAVEDAIARKRAKIP) forms a coiled coil.

In terms of assembly, interacts with ZFC3H1 in a RNase-insensitive manner.

Its subcellular location is the nucleus. This Rattus norvegicus (Rat) protein is Zinc finger CCCH domain-containing protein 18 (Zc3h18).